We begin with the raw amino-acid sequence, 424 residues long: Serpin A11 (424 aa).

Residues 1–21 (MGPVWLWLWLLVAEVLLPVHC) form the signal peptide. N-linked (GlcNAc...) asparagine glycosylation is found at Asn108, Asn171, Asn352, and Asn387.

This sequence belongs to the serpin family.

The protein localises to the secreted. This chain is Serpin A11 (Serpina11), found in Mus musculus (Mouse).